Here is a 292-residue protein sequence, read N- to C-terminus: ATP phosphoribosyltransferase (292 aa).

Belongs to the ATP phosphoribosyltransferase family. Long subfamily. Mg(2+) is required as a cofactor.

It localises to the cytoplasm. The enzyme catalyses 1-(5-phospho-beta-D-ribosyl)-ATP + diphosphate = 5-phospho-alpha-D-ribose 1-diphosphate + ATP. It participates in amino-acid biosynthesis; L-histidine biosynthesis; L-histidine from 5-phospho-alpha-D-ribose 1-diphosphate: step 1/9. Its activity is regulated as follows. Feedback inhibited by histidine. Its function is as follows. Catalyzes the condensation of ATP and 5-phosphoribose 1-diphosphate to form N'-(5'-phosphoribosyl)-ATP (PR-ATP). Has a crucial role in the pathway because the rate of histidine biosynthesis seems to be controlled primarily by regulation of HisG enzymatic activity. The polypeptide is ATP phosphoribosyltransferase (Desulfatibacillum aliphaticivorans).